The primary structure comprises 337 residues: tRNA N6-adenosine threonylcarbamoyltransferase (337 aa).

The Fe cation site is built by His110 and His114. Substrate-binding positions include 133–137, Asp166, Gly179, Asp183, and Asn276; that span reads MVSGG. Asp302 lines the Fe cation pocket.

It belongs to the KAE1 / TsaD family. Requires Fe(2+) as cofactor.

It is found in the cytoplasm. It catalyses the reaction L-threonylcarbamoyladenylate + adenosine(37) in tRNA = N(6)-L-threonylcarbamoyladenosine(37) in tRNA + AMP + H(+). Required for the formation of a threonylcarbamoyl group on adenosine at position 37 (t(6)A37) in tRNAs that read codons beginning with adenine. Is involved in the transfer of the threonylcarbamoyl moiety of threonylcarbamoyl-AMP (TC-AMP) to the N6 group of A37, together with TsaE and TsaB. TsaD likely plays a direct catalytic role in this reaction. The chain is tRNA N6-adenosine threonylcarbamoyltransferase from Fervidobacterium nodosum (strain ATCC 35602 / DSM 5306 / Rt17-B1).